The chain runs to 327 residues: Lipoyl synthase (327 aa).

Positions 66, 71, 77, 92, 96, 99, and 306 each coordinate [4Fe-4S] cluster. Positions 78–295 (FSKGTATFMI…EKEAYELGFS (218 aa)) constitute a Radical SAM core domain.

Belongs to the radical SAM superfamily. Lipoyl synthase family. Requires [4Fe-4S] cluster as cofactor.

Its subcellular location is the cytoplasm. It carries out the reaction [[Fe-S] cluster scaffold protein carrying a second [4Fe-4S](2+) cluster] + N(6)-octanoyl-L-lysyl-[protein] + 2 oxidized [2Fe-2S]-[ferredoxin] + 2 S-adenosyl-L-methionine + 4 H(+) = [[Fe-S] cluster scaffold protein] + N(6)-[(R)-dihydrolipoyl]-L-lysyl-[protein] + 4 Fe(3+) + 2 hydrogen sulfide + 2 5'-deoxyadenosine + 2 L-methionine + 2 reduced [2Fe-2S]-[ferredoxin]. The protein operates within protein modification; protein lipoylation via endogenous pathway; protein N(6)-(lipoyl)lysine from octanoyl-[acyl-carrier-protein]: step 2/2. Its function is as follows. Catalyzes the radical-mediated insertion of two sulfur atoms into the C-6 and C-8 positions of the octanoyl moiety bound to the lipoyl domains of lipoate-dependent enzymes, thereby converting the octanoylated domains into lipoylated derivatives. The polypeptide is Lipoyl synthase (Neisseria meningitidis serogroup B (strain ATCC BAA-335 / MC58)).